Reading from the N-terminus, the 344-residue chain is Biotin synthase (344 aa).

The region spanning 40 to 267 (AQVQVSTLLS…KSMVRLSAGR (228 aa)) is the Radical SAM core domain. The [4Fe-4S] cluster site is built by cysteine 55, cysteine 59, and cysteine 62. Residues cysteine 99, cysteine 130, cysteine 190, and arginine 262 each coordinate [2Fe-2S] cluster.

Belongs to the radical SAM superfamily. Biotin synthase family. Homodimer. Requires [4Fe-4S] cluster as cofactor. The cofactor is [2Fe-2S] cluster.

It catalyses the reaction (4R,5S)-dethiobiotin + (sulfur carrier)-SH + 2 reduced [2Fe-2S]-[ferredoxin] + 2 S-adenosyl-L-methionine = (sulfur carrier)-H + biotin + 2 5'-deoxyadenosine + 2 L-methionine + 2 oxidized [2Fe-2S]-[ferredoxin]. Its pathway is cofactor biosynthesis; biotin biosynthesis; biotin from 7,8-diaminononanoate: step 2/2. Its function is as follows. Catalyzes the conversion of dethiobiotin (DTB) to biotin by the insertion of a sulfur atom into dethiobiotin via a radical-based mechanism. This is Biotin synthase from Xanthomonas axonopodis pv. citri (strain 306).